A 250-amino-acid polypeptide reads, in one-letter code: MIYIKNPNEIQKIKNAAQIYKKIVKQFNFDYIKNKSLKEIDQMLRDFVSQHHANSCYHGYLGFKGYHCLSLNQTIIHGLANDEIFTSKDKLTIDIGIELDNYYCDSAFTILGPDVNPRQKLLSEVTHNCIFELVKKIVPNQTTTNDLGIWTEEYAKKYGYSVIKDFGGHGCGIKIHEDPIILNYGTKKSSELLTPNMVICIEPMFFEKDNRYYIDPDDSWSVKPVNKNQYVCHWEHMVLIKEDQAEILTL.

Residue His-77 coordinates substrate. A divalent metal cation contacts are provided by Asp-94, Asp-105, and His-169. His-176 provides a ligand contact to substrate. Residues Glu-202 and Glu-235 each contribute to the a divalent metal cation site.

It belongs to the peptidase M24A family. Methionine aminopeptidase type 1 subfamily. Monomer. Co(2+) is required as a cofactor. The cofactor is Zn(2+). It depends on Mn(2+) as a cofactor. Requires Fe(2+) as cofactor.

The enzyme catalyses Release of N-terminal amino acids, preferentially methionine, from peptides and arylamides.. Removes the N-terminal methionine from nascent proteins. The N-terminal methionine is often cleaved when the second residue in the primary sequence is small and uncharged (Met-Ala-, Cys, Gly, Pro, Ser, Thr, or Val). Requires deformylation of the N(alpha)-formylated initiator methionine before it can be hydrolyzed. In Mycoplasmoides gallisepticum (strain R(low / passage 15 / clone 2)) (Mycoplasma gallisepticum), this protein is Methionine aminopeptidase.